The chain runs to 393 residues: Enoyl-[acyl-carrier-protein] reductase [NADH] (393 aa).

Residues 48–53 (GSSTGY), 74–75 (FE), 111–112 (DA), and 139–140 (LA) each bind NAD(+). Tyrosine 225 contacts substrate. Tyrosine 235 functions as the Proton donor in the catalytic mechanism. Residues lysine 244 and 273 to 275 (LVT) contribute to the NAD(+) site.

Belongs to the TER reductase family. Monomer.

It carries out the reaction a 2,3-saturated acyl-[ACP] + NAD(+) = a (2E)-enoyl-[ACP] + NADH + H(+). It functions in the pathway lipid metabolism; fatty acid biosynthesis. Functionally, involved in the final reduction of the elongation cycle of fatty acid synthesis (FAS II). Catalyzes the reduction of a carbon-carbon double bond in an enoyl moiety that is covalently linked to an acyl carrier protein (ACP). The polypeptide is Enoyl-[acyl-carrier-protein] reductase [NADH] (Pseudoalteromonas atlantica (strain T6c / ATCC BAA-1087)).